A 106-amino-acid chain; its full sequence is Large ribosomal subunit protein eL30 (106 aa).

It belongs to the eukaryotic ribosomal protein eL30 family.

The sequence is that of Large ribosomal subunit protein eL30 from Methanococcus maripaludis (strain C7 / ATCC BAA-1331).